Reading from the N-terminus, the 201-residue chain is Transcriptional regulator GfcR (201 aa).

This sequence belongs to the purine/pyrimidine phosphoribosyltransferase family. GfcR subfamily.

This is Transcriptional regulator GfcR from Methanobrevibacter smithii (strain ATCC 35061 / DSM 861 / OCM 144 / PS).